We begin with the raw amino-acid sequence, 356 residues long: MNTFGSKLRLTTFGESHGKAIGGVLDGFPAGVAIDEEFLQSEMDKRKPGGKYATSRKEADEVEILSGIFEGFSTGTPIGFIIKNSNQHSKDYDSIKDLFRPGHADFTYFSKFGVRDHRGGGRSSARETAVRVAAGAFGAMMLKEFDIDIKSGVFSIGKLKSNKIDFEFASKSEIFMLDSDIEEDAKNLILDVKNSNDSVGAATLTIINGVPAGLGEVLYDKLDARLAAAMMGINGVKGVEIGLGSQASFILGSQNNDFMDKNGFMSNNAGGILGGISNGEPIMIKTYFKPTPSIFKDQPTINLNGDEVTCALRGRHDPCIGIRGSVVANAMARLVISDMLLLNASSKLSNLKKIYS.

Position 46 (R46) interacts with NADP(+). Residues 122 to 124 (RSS), 234 to 235 (NG), G274, 289 to 293 (KPTPS), and R315 each bind FMN.

Belongs to the chorismate synthase family. Homotetramer. FMNH2 is required as a cofactor.

The enzyme catalyses 5-O-(1-carboxyvinyl)-3-phosphoshikimate = chorismate + phosphate. The protein operates within metabolic intermediate biosynthesis; chorismate biosynthesis; chorismate from D-erythrose 4-phosphate and phosphoenolpyruvate: step 7/7. Catalyzes the anti-1,4-elimination of the C-3 phosphate and the C-6 proR hydrogen from 5-enolpyruvylshikimate-3-phosphate (EPSP) to yield chorismate, which is the branch point compound that serves as the starting substrate for the three terminal pathways of aromatic amino acid biosynthesis. This reaction introduces a second double bond into the aromatic ring system. This chain is Chorismate synthase, found in Campylobacter fetus subsp. fetus (strain 82-40).